The sequence spans 163 residues: HTH-type transcriptional regulator IscR (163 aa).

The HTH rrf2-type domain maps to 2–131 (RLTSKGRYAV…NNITLGELVN (130 aa)). The H-T-H motif DNA-binding region spans 28–51 (LADISERQGISLSYLEQLFSRLRK). [2Fe-2S] cluster-binding residues include Cys92, Cys98, and Cys104.

[2Fe-2S] cluster is required as a cofactor.

Its function is as follows. Regulates the transcription of several operons and genes involved in the biogenesis of Fe-S clusters and Fe-S-containing proteins. This Klebsiella pneumoniae (strain 342) protein is HTH-type transcriptional regulator IscR.